An 82-amino-acid chain; its full sequence is uncharacterized protein (82 aa).

Residues methionine 1 to arginine 20 are disordered.

This is an uncharacterized protein from Archaeoglobus fulgidus (strain ATCC 49558 / DSM 4304 / JCM 9628 / NBRC 100126 / VC-16).